We begin with the raw amino-acid sequence, 421 residues long: MSSILVEGGKSLRGEINISGAKNAALPIIVASLLSSKTLVINNVPQLSDVSDMLFILKSCGVHVEIVESGTIALTANNISCHFSPPCNIVKKMRASIWILAPLLLRLGQVRIALPGGCAIGQRRIDLHLAALKAFGANIQLEEDYISANCSSRMHGISFKFDKVSVGATITAIMCAVLANGSTKLANCAQEPEIADLCYCLRKMGANITGIGTANISIIGVKELNGANYSIIPDRIEAGTYMVAAAITQGKIKLNNVIFKHLKSAITKLRLSGAIIQYQNENSLIIEGANIIKPLNIQTNPYPNFPTDLQAQFMSLMSIADGVSIITENIYENRYMHVFELIKMGANIVIQSREAIVTGVKKLHGADVIATDLRASVSLVLAGLSAAGITRVKRMHHLDRGYESLVEKLQNCNARVQRIPD.

22 to 23 is a phosphoenolpyruvate binding site; sequence KN. Residue R94 participates in UDP-N-acetyl-alpha-D-glucosamine binding. C118 acts as the Proton donor in catalysis. A 2-(S-cysteinyl)pyruvic acid O-phosphothioketal modification is found at C118. UDP-N-acetyl-alpha-D-glucosamine is bound by residues 163-166, D308, and I330; that span reads KVSV.

The protein belongs to the EPSP synthase family. MurA subfamily.

The protein resides in the cytoplasm. It catalyses the reaction phosphoenolpyruvate + UDP-N-acetyl-alpha-D-glucosamine = UDP-N-acetyl-3-O-(1-carboxyvinyl)-alpha-D-glucosamine + phosphate. The protein operates within cell wall biogenesis; peptidoglycan biosynthesis. In terms of biological role, cell wall formation. Adds enolpyruvyl to UDP-N-acetylglucosamine. The protein is UDP-N-acetylglucosamine 1-carboxyvinyltransferase of Orientia tsutsugamushi (strain Ikeda) (Rickettsia tsutsugamushi).